We begin with the raw amino-acid sequence, 287 residues long: 3-alpha-hydroxysteroid sulfotransferase (287 aa).

44–49 (KSGTNW) contacts 3'-phosphoadenylyl sulfate. Substrate is bound by residues W72 and W77. Residue H99 is the Proton acceptor of the active site. 3'-phosphoadenylyl sulfate contacts are provided by residues R121, S129, Y184, 218–223 (SSFQFM), and 247–249 (RKG).

It belongs to the sulfotransferase 1 family. In terms of assembly, homodimer. Adrenal gland and liver.

Its subcellular location is the cytoplasm. It carries out the reaction an alcohol + 3'-phosphoadenylyl sulfate = an alkyl sulfate + adenosine 3',5'-bisphosphate + H(+). Sulfotransferase that utilizes 3'-phospho-5'-adenylyl sulfate (PAPS) as sulfonate donor to catalyze the sulfonation of 3-alpha-hydroxyl groups of neutral steroids. The polypeptide is 3-alpha-hydroxysteroid sulfotransferase (STD1) (Cavia porcellus (Guinea pig)).